The sequence spans 150 residues: Transthyretin (150 aa).

The signal sequence occupies residues 1 to 20 (MAFHSMLLVFLAGLVFLTEA). At Cys-33 the chain carries Sulfocysteine. L-thyroxine-binding residues include Lys-38, Glu-77, and Ser-140.

The protein belongs to the transthyretin family. In terms of assembly, homotetramer. Dimer of dimers. In the homotetramer, subunits assemble around a central channel that can accommodate two ligand molecules. Interacts with RBP4. In terms of processing, sulfonation of the reactive cysteine Cys-33 enhances the stability of the native conformation of TTR, avoiding misassembly of the protein leading to amyloid formation. In terms of tissue distribution, strongly expressed in the brain, and to a lesser extent in the eye.

It localises to the secreted. Functionally, thyroid hormone-binding protein, with a much higher binding affinity for triiodothyronine (T3) than for thyroxine (T4). Probably transports triiodothyronine from the bloodstream to the brain. This chain is Transthyretin (TTR), found in Crocodylus porosus (Saltwater crocodile).